Reading from the N-terminus, the 1177-residue chain is Putative ATP-dependent RNA helicase TDRD12 (1177 aa).

Residues 56 to 118 form the Tudor 1 domain; the sequence is TLEEGQVCVV…RVVVESFMQL (63 aa). The 189-residue stretch at 447–635 folds into the Helicase ATP-binding domain; the sequence is WPPIARGCDV…KEFMNDPYIV (189 aa). 460-467 lines the ATP pocket; sequence SHCESNPL. The DEAH box motif lies at 574 to 577; the sequence is DEVE. Residues 900–999 enclose the Tudor 2 domain; that stretch reads IVDKHMDLYA…HTLPPQAVEF (100 aa). The disordered stretch occupies residues 1098 to 1177; that stretch reads EESLSQTPPR…VFKRWLSSNR (80 aa). A compositionally biased stretch (polar residues) spans 1100–1115; sequence SLSQTPPRVTGTSPAQ.

As to quaternary structure, component of a mRNP complex containing PIWIL2, TDRD1 and piRNAs. Component of the PET complex, at least composed of EXD1, PIWIL2, TDRD12 and piRNAs.

It catalyses the reaction ATP + H2O = ADP + phosphate + H(+). Functionally, probable ATP-binding RNA helicase required during spermatogenesis to repress transposable elements and preventing their mobilization, which is essential for the germline integrity. Acts via the piRNA metabolic process, which mediates the repression of transposable elements during meiosis by forming complexes composed of piRNAs and Piwi proteins and governs the methylation and subsequent repression of transposons. Involved in the secondary piRNAs metabolic process. Acts via the PET complex, a multiprotein complex required during the secondary piRNAs metabolic process for the PIWIL2 slicing-triggered loading of PIWIL4 piRNAs. This is Putative ATP-dependent RNA helicase TDRD12 (TDRD12) from Homo sapiens (Human).